The primary structure comprises 308 residues: Ribosomal RNA small subunit methyltransferase H (308 aa).

S-adenosyl-L-methionine-binding positions include G31–H33, D51, F75, D97, and Q104.

This sequence belongs to the methyltransferase superfamily. RsmH family.

It localises to the cytoplasm. It catalyses the reaction cytidine(1402) in 16S rRNA + S-adenosyl-L-methionine = N(4)-methylcytidine(1402) in 16S rRNA + S-adenosyl-L-homocysteine + H(+). In terms of biological role, specifically methylates the N4 position of cytidine in position 1402 (C1402) of 16S rRNA. In Tolumonas auensis (strain DSM 9187 / NBRC 110442 / TA 4), this protein is Ribosomal RNA small subunit methyltransferase H.